Reading from the N-terminus, the 183-residue chain is TATA-box-binding protein 1 (183 aa).

2 tandem repeats follow at residues 8–84 (IENV…AKKL) and 99–177 (VQNI…RQQL).

Belongs to the TBP family.

Its function is as follows. General factor that plays a role in the activation of archaeal genes transcribed by RNA polymerase. Binds specifically to the TATA box promoter element which lies close to the position of transcription initiation. In Methanosarcina acetivorans (strain ATCC 35395 / DSM 2834 / JCM 12185 / C2A), this protein is TATA-box-binding protein 1.